The primary structure comprises 163 residues: Nucleotide-binding protein HDEF_1968 (163 aa).

It belongs to the YajQ family.

Functionally, nucleotide-binding protein. In Hamiltonella defensa subsp. Acyrthosiphon pisum (strain 5AT), this protein is Nucleotide-binding protein HDEF_1968.